A 632-amino-acid polypeptide reads, in one-letter code: Fem-3 mRNA-binding factor 2 (632 aa).

Basic residues predominate over residues 1 to 11; sequence MDQSKMRRTNQ. The segment at 1–37 is disordered; that stretch reads MDQSKMRRTNQFRKTSQKPPSTGIDSYPTPAQSPMAQ. Positions 12–35 are enriched in polar residues; it reads FRKTSQKPPSTGIDSYPTPAQSPM. A PUM-HD domain is found at 162–566; that stretch reads TRSNNVLPTW…KMIETLANLR (405 aa). Pumilio repeat units lie at residues 187-225, 226-264, 271-307, 308-332, 345-384, 400-436, 438-473, and 484-521; these read EVLD…QLFE, QVIG…GYTK, NFIS…KLVQ, ALPR…QKVV, DFVA…DLTS, SVTN…CIIE, CLMR…EMMD, and DTGK…RQTK. A disordered region spans residues 609 to 632; sequence MLEPRSNKSSVSVKFSSSGSHGDD. Positions 615–632 are enriched in low complexity; the sequence is NKSSVSVKFSSSGSHGDD.

In terms of assembly, interacts (via C-terminus) with gld-3 isoform A in an RNA-independent manner. Interacts with dlc-1, and is required for the localization of fbf-2 to P granules. Interacts (via RNA-binding domain) with lst-1, probably displaces bound auto-inhibitory C-terminal tail and alters its RNA-binding affinity. As to expression, expressed specifically in the germline (at protein level).

The protein localises to the cytoplasm. It is found in the cytoplasmic granule. Its function is as follows. RNA-binding protein that binds to the consensus sequence 5'-UGUGCCAUA-3' in mRNA 3'-UTRs. Involved in the control of stem cells and sex determination in the C.elegans hermaphrodite germline. May also play a role in the hermaphrodite germline proliferation and oogenesis. By binding to the 3'-UTR, represses phosphatase lip-1 expression in the distal part of the germline mitotic zone. Binds specifically to the regulatory region of fem-3 3'-UTR and mediates the sperm/oocyte switch. Negatively regulates gld-3 expression possibly by directly binding to two sites within the gld-3 isoform b 3'-UTR. Suppresses germline tumor formation by preventing the dedifferentiation of secondary spermatocytes. C-terminal disordered region probably auto-inhibits RNA binding; auto-inhibition may be reversed by interaction with lst-1. The polypeptide is Fem-3 mRNA-binding factor 2 (Caenorhabditis elegans).